A 520-amino-acid chain; its full sequence is Kelch domain-containing protein 4 (520 aa).

Over residues 1–10 the composition is skewed to basic residues; that stretch reads MGKKGKKEKK. The segment at 1-33 is disordered; sequence MGKKGKKEKKGRGAEKTAAKMEKKVSKRSRKEE. Over residues 11-24 the composition is skewed to basic and acidic residues; that stretch reads GRGAEKTAAKMEKK. Kelch repeat units lie at residues 77 to 129, 133 to 187, 188 to 241, 243 to 289, and 308 to 361; these read ELIL…VVPQ, QLWV…AWKR, QLIL…VTPQ, GIVV…MNPS, and QTLF…RRGR. 3 disordered regions span residues 346–379, 402–431, and 481–520; these read QLKG…AGTQ, LTAP…GPCP, and DPET…GAED. A phosphoserine mark is found at serine 413 and serine 418. Residues 443-494 form a Kelch 6 repeat; the sequence is VLYVYGGMFEAGDRQVTLSDLHCLDLHRMEAWKALVEMDPETQEWLEETDSE.

In Homo sapiens (Human), this protein is Kelch domain-containing protein 4 (KLHDC4).